We begin with the raw amino-acid sequence, 498 residues long: Germ cell-less protein-like 2 (498 aa).

The Nuclear localization signal signature appears at 33-39; sequence SRKRKRN. Positions 90-160 constitute a BTB domain; that stretch reads SDIKIRALGR…LYTDADLSIT (71 aa).

As to quaternary structure, interacts with CUL3.

The protein resides in the nucleus matrix. It functions in the pathway protein modification; protein ubiquitination. In terms of biological role, possible function in spermatogenesis. Probable substrate-specific adapter of an E3 ubiquitin-protein ligase complex which mediates the ubiquitination and subsequent proteasomal degradation of target proteins. The protein is Germ cell-less protein-like 2 (Gmcl2) of Mus musculus (Mouse).